Here is an 819-residue protein sequence, read N- to C-terminus: Zinc finger protein 27 (819 aa).

In terms of domain architecture, KRAB spans 1-75 (MDVTIDFSRE…KTLGAESCHD (75 aa)). Positions 93–123 (PKRPRHWDPPEDEPKHSSDLQTHDESNGLKR) are disordered. The span at 98 to 120 (HWDPPEDEPKHSSDLQTHDESNG) shows a compositional bias: basic and acidic residues. 21 consecutive C2H2-type zinc fingers follow at residues 205 to 227 (YVCVECGKACSQTSEFLTHQKTH), 233 to 255 (YKCGDCGKSFFQVSSLFRHRRIH), 261 to 283 (YDCSHCGKGFSYNSDLRIHQKIH), 289 to 311 (HGCVDCGKAFTQKSTLRMHQKIH), 317 to 339 (YVCIECGQAFIQKTHLVAHRRIH), 345 to 367 (YACDGCGKAFLSKSQLLVHQRIH), 401 to 423 (SICAECGKAFTYRSELIIHQRTH), 429 to 451 (YQCGDCGKAFTQKSALTVHRRIH), 457 to 479 (YVCVKCGLAFVQRAHLDAHQVIH), 485 to 507 (YQCGHCGKFFTSKSQLHVHKRIH), 513 to 535 (YVCSNCGKAFANRSNLITHQKTH), 541 to 563 (YVCARCGKAFTQRSDLVTHQRIH), 569 to 591 (YGCSTCGKAFTQKSHLSIHEKIH), 597 to 619 (YGCRDCGKAFNQKSILIVHQKIH), 625 to 647 (HVCAECGRAFIRKSNFITHQRIH), 653 to 675 (YGCTDCGKSFTSKSQLLVHRPIH), 681 to 703 (YVCAECGKAFSGRSNLSKHQKTH), 709 to 731 (YACSECGKSFRQKSELITHHRIH), 737 to 759 (YDCGDCGKSFTKKSQLQVHQRIH), 765 to 787 (YRCAECGKAFTDRSNLNKHQTTH), and 793 to 815 (YKCVVCGKGFVQKSVLSIHENVH).

It belongs to the krueppel C2H2-type zinc-finger protein family.

The protein localises to the nucleus. In terms of biological role, may be involved in transcriptional regulation. In Mus musculus (Mouse), this protein is Zinc finger protein 27 (Zfp27).